A 45-amino-acid polypeptide reads, in one-letter code: Monellin chain A (45 aa).

Heterodimer of an A chain and a B chain.

Taste-modifying protein; intensely sweet-tasting protein. The sequence is that of Monellin chain A from Dioscoreophyllum cumminsii (Serendipity berry).